Reading from the N-terminus, the 594-residue chain is (-)-endo-fenchol synthase, chloroplastic (594 aa).

The transit peptide at 1-50 directs the protein to the chloroplast; that stretch reads MSSLVMHVGIVNKPAITYLPTLSRRASNLHNVSSTRLQTSCSLQLDYKPV. 4 residues coordinate Mg(2+): Asp-348, Asp-352, Asp-492, and Glu-500. The DDXXD motif motif lies at 348 to 352; it reads DDIYD.

This sequence belongs to the terpene synthase family. Tpsa subfamily. Mg(2+) is required as a cofactor. Requires Mn(2+) as cofactor. Expressed at low levels in leaves.

The protein localises to the plastid. Its subcellular location is the chloroplast. It carries out the reaction (2E)-geranyl diphosphate = alpha-pinene + diphosphate. It catalyses the reaction (2E)-geranyl diphosphate + H2O = (1S,2S,4R)-endo-fenchol + diphosphate. The enzyme catalyses (2E)-geranyl diphosphate = limonene + diphosphate. Its pathway is secondary metabolite biosynthesis; terpenoid biosynthesis. In terms of biological role, monoterpene synthase involved in the biosynthesis of volatile compounds widely used in aromatherapy and folk medicine, and present in culinary herbs. Mediates the conversion of (2E)-geranyl diphosphate (GPP) into alpha fenchol, limonene and alpha-pinene and, as minor compounds, into beta-myrcene, alpha-terpinolene and alpha-phellandrene. The protein is (-)-endo-fenchol synthase, chloroplastic of Lavandula stoechas (Butterfly lavender).